The following is a 345-amino-acid chain: UDP-3-O-acylglucosamine N-acyltransferase (345 aa).

The Proton acceptor role is filled by His241.

Belongs to the transferase hexapeptide repeat family. LpxD subfamily. In terms of assembly, homotrimer.

It carries out the reaction a UDP-3-O-[(3R)-3-hydroxyacyl]-alpha-D-glucosamine + a (3R)-hydroxyacyl-[ACP] = a UDP-2-N,3-O-bis[(3R)-3-hydroxyacyl]-alpha-D-glucosamine + holo-[ACP] + H(+). It participates in bacterial outer membrane biogenesis; LPS lipid A biosynthesis. In terms of biological role, catalyzes the N-acylation of UDP-3-O-acylglucosamine using 3-hydroxyacyl-ACP as the acyl donor. Is involved in the biosynthesis of lipid A, a phosphorylated glycolipid that anchors the lipopolysaccharide to the outer membrane of the cell. In Desulfotalea psychrophila (strain LSv54 / DSM 12343), this protein is UDP-3-O-acylglucosamine N-acyltransferase.